Consider the following 298-residue polypeptide: Tyrosine recombinase XerC (298 aa).

Residues 2-88 (TDLHTDVERY…ALRSFFDWLV (87 aa)) enclose the Core-binding (CB) domain. The region spanning 109 to 288 (HLPKNIDVDD…DFQHLASVYD (180 aa)) is the Tyr recombinase domain. Active-site residues include Arg-148, Lys-172, His-240, Arg-243, and His-266. Tyr-275 (O-(3'-phospho-DNA)-tyrosine intermediate) is an active-site residue.

It belongs to the 'phage' integrase family. XerC subfamily. Forms a cyclic heterotetrameric complex composed of two molecules of XerC and two molecules of XerD, in which XerC interacts with XerD via its C-terminal region, XerD interacts with XerC via its C-terminal region and so on.

It localises to the cytoplasm. FtsK may regulate the catalytic switch between XerC and XerD in the heterotetrameric complex during the two steps of the recombination process. Site-specific tyrosine recombinase, which acts by catalyzing the cutting and rejoining of the recombining DNA molecules. Binds cooperatively to specific DNA consensus sequences that are separated from XerD binding sites by a short central region, forming the heterotetrameric XerC-XerD complex that recombines DNA substrates. The complex is essential to convert dimers of the bacterial chromosome into monomers to permit their segregation at cell division. It also contributes to the segregational stability of plasmids. In the complex XerC specifically exchanges the top DNA strands. The chain is Tyrosine recombinase XerC from Shigella flexneri serotype 5b (strain 8401).